Here is a 122-residue protein sequence, read N- to C-terminus: UPF0145 protein TV0671 (122 aa).

This sequence belongs to the UPF0145 family.

This Thermoplasma volcanium (strain ATCC 51530 / DSM 4299 / JCM 9571 / NBRC 15438 / GSS1) protein is UPF0145 protein TV0671.